The chain runs to 139 residues: Small ribosomal subunit protein uS12 (139 aa).

The tract at residues 1–44 (MPTINQLVRKPRQSKITKSKSPALNKGYNSFKKSLTDVKSPQKR) is disordered. Residues 9-18 (RKPRQSKITK) show a composition bias toward basic residues. Positions 19-39 (SKSPALNKGYNSFKKSLTDVK) are enriched in polar residues. Asp102 is subject to 3-methylthioaspartic acid.

This sequence belongs to the universal ribosomal protein uS12 family. As to quaternary structure, part of the 30S ribosomal subunit. Contacts proteins S8 and S17. May interact with IF1 in the 30S initiation complex.

With S4 and S5 plays an important role in translational accuracy. Functionally, interacts with and stabilizes bases of the 16S rRNA that are involved in tRNA selection in the A site and with the mRNA backbone. Located at the interface of the 30S and 50S subunits, it traverses the body of the 30S subunit contacting proteins on the other side and probably holding the rRNA structure together. The combined cluster of proteins S8, S12 and S17 appears to hold together the shoulder and platform of the 30S subunit. The chain is Small ribosomal subunit protein uS12 from Lysinibacillus sphaericus (strain C3-41).